A 711-amino-acid chain; its full sequence is Acyl-CoA dehydrogenase FadE34 (711 aa).

Belongs to the acyl-CoA dehydrogenase family. As to quaternary structure, homodimer. It depends on FAD as a cofactor.

It catalyses the reaction 3-oxochol-4-en-24-oyl-CoA + A = (22E)-3-oxochola-4,22-dien-24-oyl-CoA + AH2. The enzyme catalyses 3beta-hydroxy-chol-5-ene-24-oyl-CoA + A = 3beta-hydroxy-chol-5,22-dien-24-oyl-CoA + AH2. It participates in steroid metabolism; cholesterol degradation. Involved in the second cycle of side chain dehydrogenation in the beta-oxidation of cholesterol catabolism. It contributes partly to the virulence by increasing the efficiency of beta-oxidation. Catalyzes the dehydrogenation of the five-carbon steroid side chain of 3-oxo-chol-4-en-24-oyl-CoA (3-OCO-CoA) to yield 3-oxochol-4,22-dien-24-oyl-CoA. Can also use 3beta-hydroxy-chol-5-ene-24-oyl-CoA, and shows weak activity with cholyl-CoA and deoxycholyl-CoA. This is Acyl-CoA dehydrogenase FadE34 (fadE34) from Mycobacterium tuberculosis (strain ATCC 25618 / H37Rv).